The chain runs to 38 residues: Lebetin-2-alpha (38 aa).

The disordered stretch occupies residues 1 to 38 (GDNKPPKKGPPNGCFGHKIDRIGSHSGLGCNKVDDNKG). A disulfide bridge links Cys14 with Cys30.

Belongs to the natriuretic peptide family. In terms of tissue distribution, expressed by the venom gland.

The protein resides in the secreted. Inhibits platelet aggregation induced by thrombin, collagen and PAF-acether. Human platelet aggregation induced by thrombin is inhibited by synthetic lebetin-1-alpha with (IC(50)=140 nM). In vivo, inhibits collagen-induced thrombocytopenia in rats. Is not toxic upon intravenous injection into mice and rats. Its function is as follows. Inhibits platelet aggregation induced by thrombin, collagen and PAF-acether. Human platelet aggregation induced by thrombin is inhibited by synthetic lebetin-1-beta with (IC(50)=32 nM). In vivo, inhibits collagen-induced thrombocytopenia in rats. Is not toxic upon intravenous injection into mice and rats. Functionally, inhibits platelet aggregation induced by thrombin, collagen and PAF-acether. Human platelet aggregation induced by thrombin is inhibited by synthetic lebetin-1-gamma with (IC(50)=5 nM). In vivo, inhibits collagen-induced thrombocytopenia in rats. Is not toxic upon intravenous injection into mice and rats. In terms of biological role, inhibits platelet aggregation induced by thrombin, collagen and PAF-acether. Human platelet aggregation induced by thrombin is inhibited by synthetic lebetin-1-alpha with (IC(50)=2.5 nM). In vivo, inhibits collagen-induced thrombocytopenia in rats. Is not toxic upon intravenous injection into mice and rats. Inhibits platelet aggregation induced by thrombin, collagen and PAF-acether. Human platelet aggregation induced by thrombin is inhibited by synthetic lebetin-1-alpha with (IC(50)=2.8 nM). In vivo, inhibits collagen-induced thrombocytopenia in rats. Is not toxic upon intravenous injection into mice and rats. The polypeptide is Lebetin-2-alpha (Macrovipera lebetinus (Levantine viper)).